Reading from the N-terminus, the 389-residue chain is (S)-8-oxocitronellyl enol synthase CYC1 (389 aa).

Residues 34–36, 62–63, 80–81, 104–105, and glutamine 138 contribute to the NADP(+) site; these read TGI, RR, DV, and AW. Active-site residues include lysine 142 and tyrosine 174. Lysine 142 and tyrosine 174 together coordinate substrate. Residues tyrosine 174, valine 201, and 208–210 contribute to the NADP(+) site; that span reads SMM. Serine 350 contacts substrate.

Belongs to the short-chain dehydrogenases/reductases (SDR) family. Highly divergent.

It catalyses the reaction (S)-8-oxocitronellyl enol + NADP(+) = (6E)-8-oxogeranial + NADPH + H(+). The enzyme catalyses (S)-8-oxocitronellyl enol + NAD(+) = (6E)-8-oxogeranial + NADH + H(+). Iridoid synthase that catalyzes the first step in generation of the iridoid ring scaffold using the linear monoterpene (6E)-8-oxogeranial as substrate. Iridoids comprise a large family of distinctive bicyclic monoterpenes that possess a wide range of pharmacological activities, including anticancer, anti-inflammatory, antifungal and antibacterial activities. This is (S)-8-oxocitronellyl enol synthase CYC1 from Camptotheca acuminata (Happy tree).